The sequence spans 346 residues: Centromere protein L (346 aa).

Serine 41 is modified (phosphoserine). Residue threonine 45 is modified to Phosphothreonine. Residue serine 55 is modified to Phosphoserine.

This sequence belongs to the CENP-L/IML3 family. As to quaternary structure, component of the CENPA-CAD complex, composed of CENPI, CENPK, CENPL, CENPO, CENPP, CENPQ, CENPR and CENPS. The CENPA-CAD complex interacts with the CENPA-NAC complex, at least composed of CENPA, CENPC, CENPH, CENPM, CENPN, CENPT and CENPU.

The protein localises to the nucleus. The protein resides in the chromosome. It is found in the centromere. Component of the CENPA-CAD (nucleosome distal) complex, a complex recruited to centromeres which is involved in assembly of kinetochore proteins, mitotic progression and chromosome segregation. May be involved in incorporation of newly synthesized CENPA into centromeres via its interaction with the CENPA-NAC complex. The polypeptide is Centromere protein L (CENPL) (Bos taurus (Bovine)).